The primary structure comprises 450 residues: Phosphoglucosamine mutase (450 aa).

The Phosphoserine intermediate role is filled by Ser-101. Mg(2+) contacts are provided by Ser-101, Asp-240, Asp-242, and Asp-244. At Ser-101 the chain carries Phosphoserine.

This sequence belongs to the phosphohexose mutase family. Mg(2+) serves as cofactor. In terms of processing, activated by phosphorylation.

The catalysed reaction is alpha-D-glucosamine 1-phosphate = D-glucosamine 6-phosphate. Its function is as follows. Catalyzes the conversion of glucosamine-6-phosphate to glucosamine-1-phosphate. The sequence is that of Phosphoglucosamine mutase from Streptococcus pneumoniae serotype 4 (strain ATCC BAA-334 / TIGR4).